The chain runs to 51 residues: Sperm protamine P1 (51 aa).

The protein belongs to the protamine P1 family. In terms of assembly, cross-linked by interchain disulfide bonds around the DNA-helix. As to expression, testis.

The protein localises to the nucleus. It localises to the chromosome. Functionally, protamines substitute for histones in the chromatin of sperm during the haploid phase of spermatogenesis. They compact sperm DNA into a highly condensed, stable and inactive complex. The protein is Sperm protamine P1 (PRM1) of Pongo pygmaeus (Bornean orangutan).